Reading from the N-terminus, the 256-residue chain is 5-oxoprolinase subunit A (256 aa).

Belongs to the LamB/PxpA family. As to quaternary structure, forms a complex composed of PxpA, PxpB and PxpC.

The catalysed reaction is 5-oxo-L-proline + ATP + 2 H2O = L-glutamate + ADP + phosphate + H(+). In terms of biological role, catalyzes the cleavage of 5-oxoproline to form L-glutamate coupled to the hydrolysis of ATP to ADP and inorganic phosphate. This is 5-oxoprolinase subunit A from Geobacillus thermodenitrificans (strain NG80-2).